A 290-amino-acid polypeptide reads, in one-letter code: Elongation factor Ts (290 aa).

The segment at 79-82 (TDFV) is involved in Mg(2+) ion dislocation from EF-Tu.

Belongs to the EF-Ts family.

It localises to the cytoplasm. Its function is as follows. Associates with the EF-Tu.GDP complex and induces the exchange of GDP to GTP. It remains bound to the aminoacyl-tRNA.EF-Tu.GTP complex up to the GTP hydrolysis stage on the ribosome. The protein is Elongation factor Ts of Pseudoalteromonas atlantica (strain T6c / ATCC BAA-1087).